The following is a 1131-amino-acid chain: cGMP-specific 3',5'-cyclic phosphodiesterase (1131 aa).

Disordered regions lie at residues 1–26 (MTDVSSPAGGAASPVEMATSSSSAAT) and 42–150 (GVAP…SQQD). Residues 42–63 (GVAPGAVPGPGSAAIPASSSSG) are compositionally biased toward low complexity. The segment covering 75 to 86 (SNNNRPAATNRS) has biased composition (polar residues). The segment covering 110 to 136 (SSSTPSQSPSPSQSPSQASIQTQTSQQ) has biased composition (low complexity). GAF domains are found at residues 255–412 (DIDV…GIGI) and 444–625 (NLEC…GLGI). The PDEase domain occupies 655–978 (SQDQTEKLTQ…RNWQDLAEKV (324 aa)). H731 serves as the catalytic Proton donor. 4 residues coordinate a divalent metal cation: H735, H771, D772, and D882. 2 disordered regions span residues 1019 to 1048 (QQSQHGSEDSHTPEHQRSGSRLSMKKTGAL) and 1078 to 1131 (SHVS…CALL). Composition is skewed to basic and acidic residues over residues 1024–1035 (GSEDSHTPEHQR) and 1078–1088 (SHVSEDMDDKS). Residues 1097 to 1117 (ASGSMGRMSASSSTSSAGGQM) show a composition bias toward low complexity. Over residues 1121-1131 (SKKRSKLCALL) the composition is skewed to basic residues. Residue C1128 is modified to Cysteine methyl ester. The S-farnesyl cysteine moiety is linked to residue C1128. Residues 1129 to 1131 (ALL) constitute a propeptide, removed in mature form.

The protein belongs to the cyclic nucleotide phosphodiesterase family. In terms of assembly, interacts with PrBP. It depends on a divalent metal cation as a cofactor.

The protein resides in the cell membrane. The catalysed reaction is 3',5'-cyclic GMP + H2O = GMP + H(+). Its function is as follows. Has a role regulating cGMP transport in Malpighian tubule principal cells. In Drosophila erecta (Fruit fly), this protein is cGMP-specific 3',5'-cyclic phosphodiesterase.